The following is a 283-amino-acid chain: Pantothenate synthetase (283 aa).

Met-30 to His-37 provides a ligand contact to ATP. The Proton donor role is filled by His-37. Gln-61 contributes to the (R)-pantoate binding site. Gln-61 contacts beta-alanine. Gly-149–Asp-152 contacts ATP. Gln-155 contacts (R)-pantoate. Leu-186–Arg-189 lines the ATP pocket.

This sequence belongs to the pantothenate synthetase family. As to quaternary structure, homodimer.

Its subcellular location is the cytoplasm. The catalysed reaction is (R)-pantoate + beta-alanine + ATP = (R)-pantothenate + AMP + diphosphate + H(+). The protein operates within cofactor biosynthesis; (R)-pantothenate biosynthesis; (R)-pantothenate from (R)-pantoate and beta-alanine: step 1/1. In terms of biological role, catalyzes the condensation of pantoate with beta-alanine in an ATP-dependent reaction via a pantoyl-adenylate intermediate. This is Pantothenate synthetase from Shigella sonnei (strain Ss046).